A 274-amino-acid polypeptide reads, in one-letter code: Shikimate dehydrogenase (NADP(+)) (274 aa).

Shikimate-binding positions include 14-16 and Thr-61; that span reads SLS. The active-site Proton acceptor is the Lys-65. Asn-85 and Asp-106 together coordinate shikimate. NADP(+) contacts are provided by residues 130 to 134, 153 to 158, and Ala-217; these read GAGGA and NRTAER. Tyr-219 lines the shikimate pocket. NADP(+) is bound at residue Gly-240.

Belongs to the shikimate dehydrogenase family. As to quaternary structure, homodimer.

It catalyses the reaction shikimate + NADP(+) = 3-dehydroshikimate + NADPH + H(+). The protein operates within metabolic intermediate biosynthesis; chorismate biosynthesis; chorismate from D-erythrose 4-phosphate and phosphoenolpyruvate: step 4/7. Involved in the biosynthesis of the chorismate, which leads to the biosynthesis of aromatic amino acids. Catalyzes the reversible NADPH linked reduction of 3-dehydroshikimate (DHSA) to yield shikimate (SA). This is Shikimate dehydrogenase (NADP(+)) from Halorubrum lacusprofundi (strain ATCC 49239 / DSM 5036 / JCM 8891 / ACAM 34).